We begin with the raw amino-acid sequence, 699 residues long: Endogenous retrovirus group K member 8 Env polyprotein (699 aa).

The disordered stretch occupies residues Met1–Pro47. Residues Met1–Ser89 form the signal peptide. Positions Ala10–Arg20 are enriched in basic residues. Residues Leu90 to Thr632 lie on the Extracellular side of the membrane. 7 N-linked (GlcNAc...) asparagine glycosylation sites follow: Asn100, Asn128, Asn153, Asn274, Asn355, Asn372, and Asn461. The interval Phe466–Val486 is fusion peptide. Residues Asn507, Asn554, Asn566, and Asn585 are each glycosylated (N-linked (GlcNAc...) asparagine). Residues Ile633–Leu653 traverse the membrane as a helical segment. Residues Val654–Val699 are Cytoplasmic-facing.

Belongs to the beta type-B retroviral envelope protein family. HERV class-II K(HML-2) env subfamily. In terms of assembly, the surface (SU) and transmembrane (TM) proteins form a heterodimer. SU and TM are attached by noncovalent interactions or by a labile interchain disulfide bond. In terms of processing, specific enzymatic cleavages in vivo yield the mature SU and TM proteins.

The protein localises to the cell membrane. It is found in the virion. In terms of biological role, retroviral envelope proteins mediate receptor recognition and membrane fusion during early infection. Endogenous envelope proteins may have kept, lost or modified their original function during evolution. This endogenous envelope protein has lost its original fusogenic properties. SU mediates receptor recognition. Functionally, TM anchors the envelope heterodimer to the viral membrane through one transmembrane domain. The other hydrophobic domain, called fusion peptide, mediates fusion of the viral membrane with the target cell membrane. In Homo sapiens (Human), this protein is Endogenous retrovirus group K member 8 Env polyprotein (ERVK-8).